The primary structure comprises 89 residues: Small ribosomal subunit protein bS20 (89 aa).

Residues 1–28 form a disordered region; that stretch reads MTLANIKSAKKRAVQSEKSRQHNASQRS.

It belongs to the bacterial ribosomal protein bS20 family.

Functionally, binds directly to 16S ribosomal RNA. This is Small ribosomal subunit protein bS20 from Mannheimia succiniciproducens (strain KCTC 0769BP / MBEL55E).